A 228-amino-acid polypeptide reads, in one-letter code: ATP synthase subunit a (228 aa).

Transmembrane regions (helical) follow at residues 14-34 (YFLLMPMTLASMLMAISWLFF), 71-91 (WVPIITTVFILLFSVNVLGLL), 101-121 (ISLTYSIGIPIWMSVNILGFY), 139-159 (FLLPLMVIIETLSLFAQPIAL), 165-185 (ANLTAGHLLIYLMSTAIWVLM), and 188-208 (VAIASITLIIFILLFLLEIGV).

This sequence belongs to the ATPase A chain family. In terms of assembly, F-type ATPases have 2 components, CF(1) - the catalytic core - and CF(0) - the membrane proton channel. CF(1) has five subunits: alpha(3), beta(3), gamma(1), delta(1), epsilon(1). CF(0) has three main subunits: a, b and c.

The protein localises to the mitochondrion inner membrane. Mitochondrial membrane ATP synthase (F(1)F(0) ATP synthase or Complex V) produces ATP from ADP in the presence of a proton gradient across the membrane which is generated by electron transport complexes of the respiratory chain. F-type ATPases consist of two structural domains, F(1) - containing the extramembraneous catalytic core and F(0) - containing the membrane proton channel, linked together by a central stalk and a peripheral stalk. During catalysis, ATP synthesis in the catalytic domain of F(1) is coupled via a rotary mechanism of the central stalk subunits to proton translocation. Key component of the proton channel; it may play a direct role in the translocation of protons across the membrane. This Pisaster ochraceus (Ochre sea star) protein is ATP synthase subunit a (ATP6).